Consider the following 228-residue polypeptide: L-ribulose-5-phosphate 4-epimerase UlaF (228 aa).

Residues 26 to 27 (GN), 43 to 44 (SG), and 72 to 73 (SS) each bind substrate. 3 residues coordinate Zn(2+): aspartate 74, histidine 93, and histidine 95. Aspartate 118 serves as the catalytic Proton donor/acceptor. Position 167 (histidine 167) interacts with Zn(2+). Tyrosine 225 functions as the Proton donor/acceptor in the catalytic mechanism.

The protein belongs to the aldolase class II family. AraD/FucA subfamily. Requires Zn(2+) as cofactor.

It carries out the reaction L-ribulose 5-phosphate = D-xylulose 5-phosphate. Its pathway is cofactor degradation; L-ascorbate degradation; D-xylulose 5-phosphate from L-ascorbate: step 4/4. Functionally, catalyzes the isomerization of L-ribulose 5-phosphate to D-xylulose 5-phosphate. Is involved in the anaerobic L-ascorbate utilization. This Escherichia coli O17:K52:H18 (strain UMN026 / ExPEC) protein is L-ribulose-5-phosphate 4-epimerase UlaF.